A 402-amino-acid polypeptide reads, in one-letter code: MTDAPLGCNSEVGTLRAVILHRPGAELQRLTPRNNDTLLFDGLPWVARAQQEHDAFADLLRSRGVEVLLLGDLLTEALDKSGAARMQGISAAVDARRLGAPLAQELSAYLRTLEAAPLARILMAGMTFDELPFGENELSLVRRMHHGGDFVIDPLPNLLFTRDSSFWIGPRVAITSLSMHARVRETSLTDLIYAHHPRFLRVRRAYESRSAPIEGGDVLLLAPGVVAVGVGERTTPAGAEALARSLFDDDLAHTVLAVPIAQERAQMHLDTVCTMVDTDAVVMYPNIQDSLTAFPIRRKSGGVTIDRAAPFVDAAADAMGIGKLRVIDTGLDPVTAEREQWDDGNNTLALAPGVVVAYERNTETNARLADSGIEVLPIAASELGTGRGGPRCMSCPAGRDPL.

The active-site Amidino-cysteine intermediate is the cysteine 392.

The protein belongs to the arginine deiminase family.

It localises to the cytoplasm. It catalyses the reaction L-arginine + H2O = L-citrulline + NH4(+). Its pathway is amino-acid degradation; L-arginine degradation via ADI pathway; carbamoyl phosphate from L-arginine: step 1/2. The chain is Arginine deiminase from Mycolicibacterium gilvum (strain PYR-GCK) (Mycobacterium gilvum (strain PYR-GCK)).